A 532-amino-acid polypeptide reads, in one-letter code: Berberine bridge enzyme-like 18 (532 aa).

A signal peptide spans 1-29 (MKFQSFFSSVLIFFTTSTLLLSIPHPVSA). N-linked (GlcNAc...) asparagine glycans are attached at residues Asn-30, Asn-33, Asn-46, Asn-59, Asn-147, Asn-169, and Asn-262. A disulfide bond links Cys-40 and Cys-102. The FAD-binding PCMH-type domain occupies 80 to 254 (DVPKPVLILT…LSWKIGLINV (175 aa)). The segment at residues 117 to 179 (HDYEGLSYVT…RTLAFPAGVC (63 aa)) is a cross-link (6-(S-cysteinyl)-8alpha-(pros-histidyl)-FAD (His-Cys)).

It belongs to the oxygen-dependent FAD-linked oxidoreductase family. It depends on FAD as a cofactor. Post-translationally, the FAD cofactor is bound via a bicovalent 6-S-cysteinyl, 8alpha-N1-histidyl FAD linkage.

It localises to the secreted. The protein resides in the cell wall. In Arabidopsis thaliana (Mouse-ear cress), this protein is Berberine bridge enzyme-like 18.